Reading from the N-terminus, the 198-residue chain is Photosystem I assembly protein Ycf4 (198 aa).

Residues 1 to 20 (MTASTTINKGDSPNGDSSAS) form a disordered region. 2 helical membrane-spanning segments follow: residues 38 to 58 (WASI…SSYL) and 78 to 98 (LVMG…WLAI).

Belongs to the Ycf4 family.

Its subcellular location is the cellular thylakoid membrane. In terms of biological role, seems to be required for the assembly of the photosystem I complex. This chain is Photosystem I assembly protein Ycf4, found in Trichormus variabilis (strain ATCC 29413 / PCC 7937) (Anabaena variabilis).